A 619-amino-acid chain; its full sequence is Chaperone protein HscA homolog (619 aa).

This sequence belongs to the heat shock protein 70 family.

Its function is as follows. Chaperone involved in the maturation of iron-sulfur cluster-containing proteins. Has a low intrinsic ATPase activity which is markedly stimulated by HscB. The sequence is that of Chaperone protein HscA homolog from Shewanella denitrificans (strain OS217 / ATCC BAA-1090 / DSM 15013).